The following is a 379-amino-acid chain: ATP-sensitive inward rectifier potassium channel 10 (379 aa).

Topologically, residues 1–61 are cytoplasmic; the sequence is MTSVAKVYYS…LKDLWTTFID (61 aa). 1,2-dioctanoyl-sn-glycero-3-phospho-(1D-myo-inositol-4,5-bisphosphate) is bound at residue Arg36. A helical membrane pass occupies residues 62–88; sequence MQWRYKLLLFSATFAGTWFLFGVVWYL. Topologically, residues 89-114 are extracellular; it reads VAVAHGDLLELDPPANHTPCVVQVHT. A disulfide bridge links Cys108 with Cys140. Positions 115-131 form an intramembrane region, discontinuously helical; Pore-forming; it reads LTGAFLFSLESQTTIGY. A Selectivity filter motif is present at residues 128–133; the sequence is TIGYGF. Residues 132–140 lie on the Extracellular side of the membrane; the sequence is GFRYISEEC. The helical transmembrane segment at 141–166 threads the bilayer; the sequence is PLAIVLLIAQLVLTTILEIFITGTFL. At 167 to 379 the chain is on the cytoplasmic side; the sequence is AKIARPKKRA…SALSVRISNV (213 aa). 1,2-dioctanoyl-sn-glycero-3-phospho-(1D-myo-inositol-4,5-bisphosphate) contacts are provided by Lys168, Arg171, and Lys173. Residue 210-217 coordinates ATP; sequence GCQVTGKL.

It belongs to the inward rectifier-type potassium channel (TC 1.A.2.1) family. KCNJ10 subfamily. As to quaternary structure, homotetramer. In kidney cells, it forms heteromeric channels with Kir5.1/KCNJ16; this interaction is required for KCNJ16 localization to the basolateral membrane. Interacts with MAGI1, alone and possibly as a heteromer with KCNJ16; this interaction may facilitate KCNJ10/KCNJ16 potassium channel expression at the basolateral membrane in kidney cells. Interacts with PATJ. As to expression, expressed in kidney (at protein level). In the nephron, expressed in the distal convoluted tubule, the connecting tubule, the collecting duct and cortical thick ascending limbs.

Its subcellular location is the membrane. It localises to the basolateral cell membrane. It catalyses the reaction K(+)(in) = K(+)(out). Channel activity is strongly regulated by variations of cytosolic pH; channels are activated by alkaline and inhibited by acidic pH values. Inhibited by Ba(2+) and Cs(+). Activated by phosphatidylinositol 4,5 biphosphate (PtdIns(4,5)P2). May be responsible for potassium buffering action of glial cells in the brain. Inward rectifier potassium channels are characterized by a greater tendency to allow potassium to flow into the cell rather than out of it. Their voltage dependence is regulated by the concentration of extracellular potassium; as external potassium is raised, the voltage range of the channel opening shifts to more positive voltages. The inward rectification is mainly due to the blockage of outward current by internal magnesium. Can be blocked by extracellular barium and cesium. In the kidney, together with KCNJ16, mediates basolateral K(+) recycling in distal tubules; this process is critical for Na(+) reabsorption at the tubules. The chain is ATP-sensitive inward rectifier potassium channel 10 from Homo sapiens (Human).